Here is a 329-residue protein sequence, read N- to C-terminus: Prostaglandin reductase 1 (329 aa).

Thr-18 carries the phosphothreonine modification. Phosphoserine is present on Ser-20. Residues 152–155 (GAVG), Lys-178, Tyr-193, Asn-217, 239–245 (CGAISTY), 270–272 (FIV), and Asn-321 each bind NADP(+). Lys-178 bears the N6-(2-hydroxyisobutyryl)lysine; alternate mark. Lys-178 carries the N6-acetyllysine; alternate modification.

This sequence belongs to the NADP-dependent oxidoreductase L4BD family. As to quaternary structure, monomer or homodimer. Ubiquitously distributed in various tissues and leukocytes, the kidney and liver had the highest enzyme activities.

It localises to the cytoplasm. The enzyme catalyses 13,14-dihydro-15-oxo-prostaglandin E1 + NADP(+) = 15-oxoprostaglandin E1 + NADPH + H(+). It carries out the reaction 13,14-dihydro-15-oxo-prostaglandin E2 + NADP(+) = 15-oxoprostaglandin E2 + NADPH + H(+). It catalyses the reaction 13,14-dihydro-15-oxo-prostaglandin E2 + NAD(+) = 15-oxoprostaglandin E2 + NADH + H(+). The catalysed reaction is 13,14-dihydro-15-oxo-prostaglandin F1alpha + NADP(+) = 15-oxoprostaglandin F1alpha + NADPH + H(+). The enzyme catalyses 13,14-dihydro-15-oxo-PGF2alpha + NADP(+) = 15-oxoprostaglandin F2alpha + NADPH + H(+). It carries out the reaction leukotriene B4 + NADP(+) = 12-oxo-leukotriene B4 + NADPH + H(+). It catalyses the reaction 20-hydroxy-leukotriene B4 + NADP(+) = 12-oxo-20-hydroxy-leukotriene B4 + NADPH + H(+). The catalysed reaction is 6-trans-leukotriene B4 + NADP(+) = 12-oxo-(5S)-hydroxy-(6E,8E,10E,14Z)-eicosatetraenoate + NADPH + H(+). The enzyme catalyses (5S,12S)-dihydroxy-(6E,10E,12E,14Z)-eicosatetraenoate + NADP(+) = 12-oxo-(5S)-hydroxy-(6E,8E,10E,14Z)-eicosatetraenoate + NADPH + H(+). It carries out the reaction 15-oxo-(5S,6R)-dihydroxy-(7E,9E,11Z,13E)-eicosatetraenoate + NADH + H(+) = 15-oxo-(5S,6R)-dihydroxy-(7E,9E,11Z)-eicosatrienoate + NAD(+). It catalyses the reaction an n-alkanal + NADP(+) = an alk-2-enal + NADPH + H(+). The catalysed reaction is hexanal + NADP(+) = (E)-hex-2-enal + NADPH + H(+). The enzyme catalyses octanal + NADP(+) = (2E)-octenal + NADPH + H(+). It carries out the reaction decanal + NADP(+) = (2E)-decenal + NADPH + H(+). It catalyses the reaction dodecanal + NADP(+) = (2E)-dodecenal + NADPH + H(+). The catalysed reaction is 4-hydroxynonanal + NADP(+) = (E)-4-hydroxynon-2-enal + NADPH + H(+). The enzyme catalyses pentan-2-one + NADP(+) = (E)-pent-3-en-2-one + NADPH + H(+). It carries out the reaction nonan-2-one + NADP(+) = (3E)-nonen-2-one + NADPH + H(+). Down-regulated by nonsteroidal anti-inflammatory drugs diclofenac, indomethacin and niflumic acid. NAD(P)H-dependent oxidoreductase involved in metabolic inactivation of pro- and anti-inflammatory eicosanoids: prostaglandins (PG), leukotrienes (LT) and lipoxins (LX). Preferentially uses NADPH over NADH as cofactor. Catalyzes with high efficiency the reduction of the 13,14 double bond of 15-oxoPGs, including 15-oxo-PGE1, 15-oxo-PGE2, 15-oxo-PGF1-alpha and 15-oxo-PGF2-alpha. Catalyzes with lower efficiency the oxidation of the hydroxyl group at C12 of LTB4 and its derivatives, converting them into biologically less active 12-oxo-LTB4 metabolites. Reduces 15-oxo-LXA4 to 13,14 dihydro-15-oxo-LXA4 and may promote neutrophil recruitment at the inflammatory site. Plays a role in metabolic detoxification of alkenals and ketones. Reduces alpha,beta-unsaturated alkenals and ketones, particularly those with medium-chain length, showing highest affinity toward (2E)-decenal and (3E)-3-nonen-2-one. May inactivate 4-hydroxy-2-nonenal, a cytotoxic lipid constituent of oxidized low-density lipoprotein particles. The protein is Prostaglandin reductase 1 (PTGR1) of Sus scrofa (Pig).